Consider the following 428-residue polypeptide: Dihydroorotase (428 aa).

Zn(2+) is bound by residues His59 and His61. Residues 61-63 and Asn93 contribute to the substrate site; that span reads HLR. Zn(2+) contacts are provided by Asp151, His178, and His231. Residue Asn277 participates in substrate binding. Asp304 contributes to the Zn(2+) binding site. Asp304 is a catalytic residue. Residues His308 and 322–323 contribute to the substrate site; that span reads FG.

The protein belongs to the metallo-dependent hydrolases superfamily. DHOase family. Class I DHOase subfamily. Zn(2+) serves as cofactor.

It catalyses the reaction (S)-dihydroorotate + H2O = N-carbamoyl-L-aspartate + H(+). Its pathway is pyrimidine metabolism; UMP biosynthesis via de novo pathway; (S)-dihydroorotate from bicarbonate: step 3/3. Functionally, catalyzes the reversible cyclization of carbamoyl aspartate to dihydroorotate. This chain is Dihydroorotase, found in Halalkalibacterium halodurans (strain ATCC BAA-125 / DSM 18197 / FERM 7344 / JCM 9153 / C-125) (Bacillus halodurans).